Reading from the N-terminus, the 1040-residue chain is Multidrug resistance protein MdtB (1040 aa).

12 helical membrane-spanning segments follow: residues 16 to 36, 347 to 367, 369 to 389, 396 to 416, 440 to 460, 472 to 492, 537 to 557, 863 to 883, 888 to 908, 911 to 931, 968 to 988, and 998 to 1018; these read FIMRPVATTLLMVAILLAGII, LMMAIALVVMIIYLFLRNIPA, IIPGVAVPLSLIGTFAVMVFL, LTLMALTIATGFVVDDAIVVI, IGFTIISLTFSLIAVLIPLLF, FAITLAVAILISAVVSLTLTP, WLTLSVALSTLLLSVLLWVFI, LGSTVWLIVAAVVAMYIVLGI, FIHPITILSTLPTAGVGALLA, IAGSELDVIAIIGIILLIGIV, ILMTTLAALLGALPLMLSTGV, and IGMVGGLIVSQVLTLFTTPVI.

It belongs to the resistance-nodulation-cell division (RND) (TC 2.A.6) family. MdtB subfamily. In terms of assembly, part of a tripartite efflux system composed of MdtA, MdtB and MdtC. MdtB forms a heteromultimer with MdtC.

The protein localises to the cell inner membrane. In terms of biological role, the MdtABC tripartite complex confers resistance against novobiocin and deoxycholate. This Escherichia coli (strain 55989 / EAEC) protein is Multidrug resistance protein MdtB.